A 416-amino-acid chain; its full sequence is Cell division control protein 3 (416 aa).

The region spanning 32–307 (RGFSLNIMAI…ENYRTEKLKR (276 aa)) is the Septin-type G domain. The interval 42 to 49 (GESGLGKA) is G1 motif. Residues 42 to 49 (GESGLGKA), Ser-79, Gly-105, 184 to 192 (KSDTLTDEE), Gly-240, and Arg-256 contribute to the GTP site. The tract at residues 102–105 (TAPG) is G3 motif. Residues 183–186 (AKSD) are G4 motif. Positions 323 to 399 (AAKQEEERAL…QLEKQKLLPQ (77 aa)) form a coiled coil. The disordered stretch occupies residues 392 to 416 (EKQKLLPQDPPAQPAPQKSRKGFLR).

It belongs to the TRAFAC class TrmE-Era-EngA-EngB-Septin-like GTPase superfamily. Septin GTPase family.

The protein resides in the bud neck. In terms of biological role, plays a role in the cell cycle. Involved in the formation of the ring of filaments in the neck region at the mother-bud junction during mitosis. The polypeptide is Cell division control protein 3 (CDC3) (Candida albicans (Yeast)).